The following is a 470-amino-acid chain: tRNA(Ile)-lysidine synthase (470 aa).

Residue 32-37 coordinates ATP; that stretch reads SGGVDS.

The protein belongs to the tRNA(Ile)-lysidine synthase family.

It is found in the cytoplasm. It catalyses the reaction cytidine(34) in tRNA(Ile2) + L-lysine + ATP = lysidine(34) in tRNA(Ile2) + AMP + diphosphate + H(+). Functionally, ligates lysine onto the cytidine present at position 34 of the AUA codon-specific tRNA(Ile) that contains the anticodon CAU, in an ATP-dependent manner. Cytidine is converted to lysidine, thus changing the amino acid specificity of the tRNA from methionine to isoleucine. The polypeptide is tRNA(Ile)-lysidine synthase (Shewanella woodyi (strain ATCC 51908 / MS32)).